The primary structure comprises 402 residues: Probable glutamate 5-kinase (402 aa).

Residues Ser-58, Asp-145, and Asn-157 each coordinate substrate. ATP-binding positions include 177–178 (TD) and 218–224 (TGGMKTK). A PUA domain is found at 295–373 (HGSLEIDRGA…KEIASILGYN (79 aa)).

It belongs to the glutamate 5-kinase family.

The protein localises to the cytoplasm. The enzyme catalyses L-glutamate + ATP = L-glutamyl 5-phosphate + ADP. The protein operates within amino-acid biosynthesis; L-proline biosynthesis; L-glutamate 5-semialdehyde from L-glutamate: step 1/2. Functionally, catalyzes the transfer of a phosphate group to glutamate to form glutamate 5-phosphate which rapidly cyclizes to 5-oxoproline. This is Probable glutamate 5-kinase from Schizosaccharomyces pombe (strain 972 / ATCC 24843) (Fission yeast).